The following is a 236-amino-acid chain: Phosphoribosylaminoimidazole-succinocarboxamide synthase (236 aa).

The protein belongs to the SAICAR synthetase family.

It carries out the reaction 5-amino-1-(5-phospho-D-ribosyl)imidazole-4-carboxylate + L-aspartate + ATP = (2S)-2-[5-amino-1-(5-phospho-beta-D-ribosyl)imidazole-4-carboxamido]succinate + ADP + phosphate + 2 H(+). It participates in purine metabolism; IMP biosynthesis via de novo pathway; 5-amino-1-(5-phospho-D-ribosyl)imidazole-4-carboxamide from 5-amino-1-(5-phospho-D-ribosyl)imidazole-4-carboxylate: step 1/2. The polypeptide is Phosphoribosylaminoimidazole-succinocarboxamide synthase (Chlorobium phaeobacteroides (strain DSM 266 / SMG 266 / 2430)).